Consider the following 97-residue polypeptide: Integration host factor subunit alpha (97 aa).

The protein belongs to the bacterial histone-like protein family. In terms of assembly, heterodimer of an alpha and a beta chain.

Functionally, this protein is one of the two subunits of integration host factor, a specific DNA-binding protein that functions in genetic recombination as well as in transcriptional and translational control. The protein is Integration host factor subunit alpha of Acinetobacter baylyi (strain ATCC 33305 / BD413 / ADP1).